Here is a 271-residue protein sequence, read N- to C-terminus: Cyanophycinase (271 aa).

Residues Ser-132, His-174, and Glu-201 each act as charge relay system in the active site.

It belongs to the peptidase S51 family. In terms of assembly, homodimer.

The enzyme catalyses [L-4-(L-arginin-2-N-yl)aspartate](n) + H2O = [L-4-(L-arginin-2-N-yl)aspartate](n-1) + L-4-(L-arginin-2-N-yl)aspartate. Its function is as follows. Exopeptidase that catalyzes the hydrolytic cleavage of multi-L-arginyl-poly-L-aspartic acid (cyanophycin; a water-insoluble reserve polymer) into aspartate-arginine dipeptides. The polypeptide is Cyanophycinase (cphB) (Synechocystis sp. (strain ATCC 27184 / PCC 6803 / Kazusa)).